The chain runs to 152 residues: Arginine repressor (152 aa).

This sequence belongs to the ArgR family.

The protein resides in the cytoplasm. Its pathway is amino-acid biosynthesis; L-arginine biosynthesis [regulation]. Regulates arginine biosynthesis genes. In Thermotoga sp. (strain RQ2), this protein is Arginine repressor.